The primary structure comprises 245 residues: Lytic switch protein BZLF1 (245 aa).

The segment at 1–167 (MMDPNSTSED…RTRKPLQPES (167 aa)) is transactivation. A phosphothreonine mark is found at T14 and T159. Residues 140 to 167 (QLADIGAPQPAPAAAPARRTRKPLQPES) form a disordered region. The Bipartite nuclear localization signal motif lies at 157-194 (RRTRKPLQPESLEECDSELDIKRYKNRVASRKCRAKFK). 3 positions are modified to phosphoserine: S167, S173, and S186. Residues 178–195 (KRYKNRVASRKCRAKFKH) form a basic motif region. A bZIP domain is found at 178-228 (KRYKNRVASRKCRAKFKHLLQHYREVASAKSSENDRLRLLLKQMCPSLDVD). The tract at residues 196 to 228 (LLQHYREVASAKSSENDRLRLLLKQMCPSLDVD) is leucine-zipper. The tract at residues 229–245 (SIIPRTPDVLHEDLLNF) is accessory activation domain.

Belongs to the bZIP family. Homodimer. Interacts (via b-ZIP domain) with the DNA polymerase processivity factor BMRF1 (via N-terminus); this interaction may inhibit BZLF1-induced transcription of the BMRF1 promoter. Interacts with human UBN1, CRTC2 and RACK1. Interacts (via N-terminus) with human PAX5 (via N-terminus); this interaction inhibits BZLF1-mediated lytic viral reactivation. Interacts (via leucine-zipper domain) with host CEBPA; this interaction induces G1 host cell cycle arrest. Interacts (via C-terminus) with host TP53BP1 (via C-terminus); this interaction is involved in the activation of the viral lytic cycle. Interacts with host chromatin-remodeling ATPase INO80; this interaction participates to the activation of early lytic viral genes by BZLF1. Interacts with host regulator of chromatin SMARCA5/hSNF2H; this interaction participates to the activation of early lytic viral genes by BZLF1. Interacts with host PLSCR1/Phospholipid scramblase 1; this interaction negatively regulates the transcriptional regulatory activity of BZLF1 by preventing the formation of the BZLF1-CBP complex.

It is found in the host nucleus. In terms of biological role, transcription factor that acts as a molecular switch to induce the transition from the latent to the lytic or productive phase of the virus cycle. Mediates the switch from the latent to the lytic cycle of infection in cells containing a highly methylated viral genome. Probably binds to silenced chromatin and recruits host chromatin-remodeling enzymes. Regulates this switch by binding to 2 types of ZEBRA response elements (ZREs): the CpG-free AP-1 like elements (latency) and the methylated CpG-containing elements (lytic replication). Activates preferentially the methylated forms of the viral lytic R (BRLF1) and Na (BRRF1) gene promoters, the latters being the first genes activated during Z-mediated reactivation in latently infected cells. BZLF1 and BRLF1 act together to trigger lytic replication. Also binds the lytic origin of replication, oriLyt. Induces G1 cell cycle arrest by stabilizing the host CCAAT/enhancer binding protein CEBPA. This function is important because the lytic cycle preferentially takes place in host cells arrested in G1. This Epstein-Barr virus (strain AG876) (HHV-4) protein is Lytic switch protein BZLF1.